The following is a 301-amino-acid chain: Homoserine O-acetyltransferase (301 aa).

The active-site Acyl-thioester intermediate is the C142. Substrate contacts are provided by K163 and S192. The Proton acceptor role is filled by H235. Residue E237 is part of the active site. Residue R249 participates in substrate binding.

It belongs to the MetA family.

It localises to the cytoplasm. It carries out the reaction L-homoserine + acetyl-CoA = O-acetyl-L-homoserine + CoA. It functions in the pathway amino-acid biosynthesis; L-methionine biosynthesis via de novo pathway; O-acetyl-L-homoserine from L-homoserine: step 1/1. Transfers an acetyl group from acetyl-CoA to L-homoserine, forming acetyl-L-homoserine. This Bacillus cereus (strain AH187) protein is Homoserine O-acetyltransferase.